We begin with the raw amino-acid sequence, 108 residues long: uncharacterized protein (108 aa).

The span at 1 to 15 (MSDSNSRLVYSTQTG) shows a compositional bias: polar residues. Positions 1-29 (MSDSNSRLVYSTQTGRIEEPKTAPVRPKG) are disordered. The span at 16-29 (RIEEPKTAPVRPKG) shows a compositional bias: basic and acidic residues.

It belongs to the SUI1 family.

This is an uncharacterized protein from Salmonella typhi.